The primary structure comprises 73 residues: Nodulin-1 (73 aa).

The N-terminal stretch at 1 to 23 (MERKTLASLCFFLIVLLAAQVVA) is a signal peptide. 3 cysteine pairs are disulfide-bonded: Cys39/Cys64, Cys49/Cys71, and Cys53/Cys73.

As to expression, expressed in nodules, but not in leaves, stems, flowers and roots. In developing nodules, expressed close to the infection threads.

The protein resides in the secreted. Functionally, nodulation-related protein probably involved in the infection process. This Medicago truncatula (Barrel medic) protein is Nodulin-1 (N1).